Reading from the N-terminus, the 65-residue chain is Photosystem II reaction center protein J (65 aa).

Residues 1–17 (MSTKLKGPDGRIPDRLP) show a composition bias toward basic and acidic residues. Residues 1 to 21 (MSTKLKGPDGRIPDRLPDGSP) are disordered. The chain crosses the membrane as a helical span at residues 36–56 (LWLVATVGGMAVLSVLGLFFF).

Belongs to the PsbJ family. In terms of assembly, PSII is composed of 1 copy each of membrane proteins PsbA, PsbB, PsbC, PsbD, PsbE, PsbF, PsbH, PsbI, PsbJ, PsbK, PsbL, PsbM, PsbT, PsbX, PsbY, Psb30/Ycf12, peripheral proteins PsbO, CyanoQ (PsbQ), PsbU, PsbV and a large number of cofactors. It forms dimeric complexes.

Its subcellular location is the cellular thylakoid membrane. Its function is as follows. One of the components of the core complex of photosystem II (PSII). PSII is a light-driven water:plastoquinone oxidoreductase that uses light energy to abstract electrons from H(2)O, generating O(2) and a proton gradient subsequently used for ATP formation. It consists of a core antenna complex that captures photons, and an electron transfer chain that converts photonic excitation into a charge separation. The chain is Photosystem II reaction center protein J from Prochlorococcus marinus (strain MIT 9313).